We begin with the raw amino-acid sequence, 249 residues long: DNA polymerase sliding clamp 3 (249 aa).

Belongs to the PCNA family. Homotrimer. The subunits circularize to form a toroid; DNA passes through its center. Replication factor C (RFC) is required to load the toroid on the DNA.

Its function is as follows. Sliding clamp subunit that acts as a moving platform for DNA processing. Responsible for tethering the catalytic subunit of DNA polymerase and other proteins to DNA during high-speed replication. The protein is DNA polymerase sliding clamp 3 of Aeropyrum pernix (strain ATCC 700893 / DSM 11879 / JCM 9820 / NBRC 100138 / K1).